Consider the following 282-residue polypeptide: 4-deoxy-L-threo-5-hexosulose-uronate ketol-isomerase 2 (282 aa).

The Zn(2+) site is built by histidine 200, histidine 202, glutamate 207, and histidine 249.

The protein belongs to the KduI family. Requires Zn(2+) as cofactor.

The catalysed reaction is 5-dehydro-4-deoxy-D-glucuronate = 3-deoxy-D-glycero-2,5-hexodiulosonate. It participates in glycan metabolism; pectin degradation; 2-dehydro-3-deoxy-D-gluconate from pectin: step 4/5. Functionally, catalyzes the isomerization of 5-dehydro-4-deoxy-D-glucuronate to 3-deoxy-D-glycero-2,5-hexodiulosonate. In Rhizobium meliloti (strain 1021) (Ensifer meliloti), this protein is 4-deoxy-L-threo-5-hexosulose-uronate ketol-isomerase 2 (kduI2).